The following is a 367-amino-acid chain: 2-aminoethylphosphonate--pyruvate transaminase (367 aa).

At lysine 194 the chain carries N6-(pyridoxal phosphate)lysine.

The protein belongs to the class-V pyridoxal-phosphate-dependent aminotransferase family. PhnW subfamily. Homodimer. Requires pyridoxal 5'-phosphate as cofactor.

It catalyses the reaction (2-aminoethyl)phosphonate + pyruvate = phosphonoacetaldehyde + L-alanine. Functionally, involved in phosphonate degradation. The polypeptide is 2-aminoethylphosphonate--pyruvate transaminase (Salmonella agona (strain SL483)).